We begin with the raw amino-acid sequence, 883 residues long: Receptor-like protein 40 (883 aa).

An N-terminal signal peptide occupies residues 1–21 (MSELLFSLNFLLLLLLSCVSP). Residues 22 to 846 (SSFFTFNNPV…EDEQVLNWKA (825 aa)) are Extracellular-facing. 3 N-linked (GlcNAc...) asparagine glycosylation sites follow: N58, N91, and N109. LRR repeat units lie at residues 97–121 (FHHL…KFGM) and 122–143 (LNNL…PFSF). N145 carries N-linked (GlcNAc...) asparagine glycosylation. LRR repeat units follow at residues 146–169 (LSML…ARNL), 170–195 (RKLR…LFEL), 197–219 (HIIY…EFGN), 220–244 (LNKL…ISNL), 246–267 (QLTE…VQNL), 268–291 (TKLS…LFTM), 293–316 (FLSY…SSSS), 317–340 (SRLE…ISKL), 342–364 (NLKE…LFSS), 365–390 (LKSL…SYIP), 391–412 (STLE…VFKT), 413–437 (LHNL…LWSL), 439–462 (RLSS…VLVN), and 463–486 (SSVQ…PLSI). N189, N207, N243, and N266 each carry an N-linked (GlcNAc...) asparagine glycan. Residues N305 and N312 are each glycosylated (N-linked (GlcNAc...) asparagine). The N-linked (GlcNAc...) asparagine glycan is linked to N352. N-linked (GlcNAc...) asparagine glycosylation occurs at N462. The stretch at 487-506 (NYFSAIDNRFGGDIPLSICN) is one LRR 17; degenerate repeat. N-linked (GlcNAc...) asparagine glycosylation is found at N506 and N519. LRR repeat units lie at residues 507–528 (RSSL…PPCL), 529–552 (SNLL…YYED), 554–576 (PLRS…LINC), 578–600 (ALQF…LKAL), 601–624 (PKLQ…NEGP), 627–651 (FPEL…FFVN), 701–724 (TSSA…IGLL), 725–747 (KALI…SFAN), 748–772 (LKKM…LRTL), and 774–797 (FLAY…QITG). A glycan (N-linked (GlcNAc...) asparagine) is linked at N575. N-linked (GlcNAc...) asparagine glycosylation is present at N731. A glycan (N-linked (GlcNAc...) asparagine) is linked at N779. The chain crosses the membrane as a helical span at residues 847–867 (VAIGYGIGVLLGLAIAQLISL). Topologically, residues 868–883 (YKPKWLASLVIKSRNC) are cytoplasmic.

Belongs to the RLP family.

Its subcellular location is the cell membrane. This chain is Receptor-like protein 40, found in Arabidopsis thaliana (Mouse-ear cress).